The primary structure comprises 39 residues: Potassium channel toxin alpha-KTx 31.1 (39 aa).

Disulfide bonds link C7-C30, C13-C35, and C17-C37.

It belongs to the short scorpion toxin superfamily. Potassium channel inhibitor family. Alpha-KTx 31 subfamily. Expressed by the venom gland.

The protein localises to the secreted. Its function is as follows. Voltage-gated potassium channel inhibitor. 1 uM of the native toxin inhibits rat Kv1.2/KCNA2 (100% inhibition), and drosophila Shaker IR/Sh (100%), human Kv1.3/KCNA3 (83%), rat Kv1.1/KCNA1 (32%) and rat Kv1.6/KCNA6 (21%). In Buthus occitanus tunetanus (Common European scorpion), this protein is Potassium channel toxin alpha-KTx 31.1.